The primary structure comprises 160 residues: Small ribosomal subunit protein bS6 (160 aa).

The tract at residues 96-160 (RKVKRFIPRA…PRTRKVSKEQ (65 aa)) is disordered. Over residues 126–145 (TTDASKTEASTEATASKQSE) the composition is skewed to low complexity. Over residues 151-160 (PRTRKVSKEQ) the composition is skewed to basic residues.

The protein belongs to the bacterial ribosomal protein bS6 family.

In terms of biological role, binds together with bS18 to 16S ribosomal RNA. The sequence is that of Small ribosomal subunit protein bS6 from Metamycoplasma arthritidis (strain 158L3-1) (Mycoplasma arthritidis).